The sequence spans 223 residues: Glycerol-3-phosphate acyltransferase (223 aa).

5 helical membrane-spanning segments follow: residues 2 to 22, 52 to 72, 78 to 98, 112 to 132, and 153 to 173; these read LEIL…GLVI, WGVA…WLAF, PVFV…SCFM, IFLP…MLVI, and LAVS…AVVV. The disordered stretch occupies residues 191–223; it reads WLKSKNKGAAAGNAAEGDDTQNMNPQDAGRKDG.

Belongs to the PlsY family. As to quaternary structure, probably interacts with PlsX.

The protein resides in the cell inner membrane. It carries out the reaction an acyl phosphate + sn-glycerol 3-phosphate = a 1-acyl-sn-glycero-3-phosphate + phosphate. It participates in lipid metabolism; phospholipid metabolism. Functionally, catalyzes the transfer of an acyl group from acyl-phosphate (acyl-PO(4)) to glycerol-3-phosphate (G3P) to form lysophosphatidic acid (LPA). This enzyme utilizes acyl-phosphate as fatty acyl donor, but not acyl-CoA or acyl-ACP. In Desulfovibrio desulfuricans (strain ATCC 27774 / DSM 6949 / MB), this protein is Glycerol-3-phosphate acyltransferase.